The primary structure comprises 973 residues: Peptidyl-glycine alpha-amidating monooxygenase (973 aa).

An N-terminal signal peptide occupies residues 1 to 20 (MAGRVPSLLVLLVFPSSCLA). Positions 1–494 (MAGRVPSLLV…EGTWEPEHTG (494 aa)) are peptidylglycine alpha-hydroxylating monooxygenase. A propeptide spanning residues 21–30 (FRSPLSVFKR) is cleaved from the precursor. The Intragranular segment spans residues 31 to 863 (FKETTRPFSN…QKLIKEPGSG (833 aa)). 5 disulfides stabilise this stretch: C42/C181, C76/C121, C109/C126, C222/C329, and C288/C310. Cu(2+) is bound by residues H102 and H103. Cu(2+) contacts are provided by H167, H237, H239, and M309. Residues 495–817 (DFHMEEALDW…LTEKLEHRSV (323 aa)) are peptidyl-alpha-hydroxyglycine alpha-amidating lyase. NHL repeat units lie at residues 498–541 (MEEA…NSFD), 567–608 (AAVL…LDPN), 617–662 (LGRS…FSPS), and 670–714 (GEES…FKTD). Ca(2+) is bound at residue V517. R530 lines the a protein pocket. H582 contacts Zn(2+). L584 serves as a coordination point for Ca(2+). A disulfide bond links C631 and C652. Position 651 (Y651) interacts with a protein. H687 is a binding site for Zn(2+). C699 and C710 are disulfide-bonded. R703 contributes to the a protein binding site. N-linked (GlcNAc...) asparagine glycosylation is present at N762. An NHL 5 repeat occupies 766–809 (GEIIDIFKPVRKHFDMPHDIVASEDGTVYIGDAHTNTVWKFTLT). Residue H783 participates in Zn(2+) binding. D784 is a binding site for Ca(2+). Residues 864 to 887 (VPVVLITTLLVIPVVVLLAIAIFI) form a helical membrane-spanning segment. A sulfotyrosine mark is found at I875 and R893. Topologically, residues 888–973 (RWKKSRAFGD…PLPALAPSSS (86 aa)) are cytoplasmic. Phosphoserine occurs at positions 918, 929, and 942. The interaction with RASSF9 stretch occupies residues 925-942 (NFFASRKGYSRKGFDRLS). Residues 937–973 (GFDRLSTEGSDQEKEDDGSESEEEYSAPLPALAPSSS) form a disordered region. At T943 the chain carries Phosphothreonine. S946 bears the Phosphoserine; by UHMK1; in vitro mark. Acidic residues predominate over residues 949–961 (EKEDDGSESEEEY). Position 957 is a phosphoserine (S957). The segment covering 962-973 (SAPLPALAPSSS) has biased composition (low complexity).

In the C-terminal section; belongs to the peptidyl-alpha-hydroxyglycine alpha-amidating lyase family. The protein in the N-terminal section; belongs to the copper type II ascorbate-dependent monooxygenase family. As to quaternary structure, monomer. Interacts with RASSF9. It depends on Zn(2+) as a cofactor. Requires Cu(2+) as cofactor.

Its subcellular location is the cytoplasmic vesicle. It localises to the secretory vesicle membrane. The protein localises to the membrane. The protein resides in the secreted. The catalysed reaction is a [peptide]-C-terminal glycine + 2 L-ascorbate + O2 = a [peptide]-C-terminal (2S)-2-hydroxyglycine + 2 monodehydro-L-ascorbate radical + H2O. It carries out the reaction a [peptide]-C-terminal (2S)-2-hydroxyglycine = a [peptide]-C-terminal amide + glyoxylate. It catalyses the reaction N-dodecanoylglycine + 2 L-ascorbate + O2 = N-dodecanoyl-(2S)-hydroxyglycine + 2 monodehydro-L-ascorbate radical + H2O. The enzyme catalyses N-dodecanoyl-(2S)-hydroxyglycine = dodecanamide + glyoxylate. The catalysed reaction is N-(9Z,12Z,15Z)-octadecatrienoylglycine + 2 L-ascorbate + O2 = N-(9Z,12Z,15Z)-octadecatrienoyl-(2S)-hydroxyglycine + 2 monodehydro-L-ascorbate radical + H2O. It carries out the reaction N-(9Z,12Z,15Z)-octadecatrienoyl-(2S)-hydroxyglycine = (9Z,12Z,15Z)-octadecatrienamide + glyoxylate. It catalyses the reaction N-(9Z-octadecenoyl)glycine + 2 L-ascorbate + O2 = N-(9Z-octadecenoyl)-(2S)-hydroxyglycine + 2 monodehydro-L-ascorbate radical + H2O. The enzyme catalyses N-(9Z-octadecenoyl)-(2S)-hydroxyglycine = (9Z)-octadecenamide + glyoxylate. The catalysed reaction is N-tetradecanoylglycine + 2 L-ascorbate + O2 = N-tetradecanoyl-(2S)-hydroxyglycine + 2 monodehydro-L-ascorbate radical + H2O. It carries out the reaction N-tetradecanoyl-(2S)-hydroxyglycine = tetradecamide + glyoxylate. It catalyses the reaction N-decanoylglycine + 2 L-ascorbate + O2 = N-decanoyl-(2S)-hydroxyglycine + 2 monodehydro-L-ascorbate radical + H2O. The enzyme catalyses N-decanoyl-(2S)-hydroxyglycine = decanamide + glyoxylate. The catalysed reaction is N-octanoylglycine + 2 L-ascorbate + O2 = N-octanoyl-(2S)-hydroxyglycine + 2 monodehydro-L-ascorbate radical + H2O. It carries out the reaction N-octanoyl-(2S)-hydroxyglycine = octanamide + glyoxylate. Its activity is regulated as follows. PAM activity is inhibited by EDTA, phenylglyoxal and diethyl pyrocarbonate. PAL activity is stimulated by cadmium and inhibited by mercury. In terms of biological role, bifunctional enzyme that catalyzes amidation of the C-terminus of proteins. Alpha-amidation is present at the C-terminus of many endocrine hormones and neuropeptides and is required for their activity. C-terminal amidation also takes place in response to protein fragmentation triggered by oxidative stress, promoting degradation of amidated protein fragments by the proteasome. Alpha-amidation involves two sequential reactions, both of which are catalyzed by separate catalytic domains of the enzyme. The first step, catalyzed by peptidyl alpha-hydroxylating monooxygenase (PHM) domain, is the copper-, ascorbate-, and O2- dependent stereospecific hydroxylation (with S stereochemistry) at the alpha-carbon (C-alpha) of the C-terminal glycine of the peptidylglycine substrate. The second step, catalyzed by the peptidylglycine amidoglycolate lyase (PAL) domain, is the zinc-dependent cleavage of the N-C-alpha bond, producing the alpha-amidated peptide and glyoxylate. Similarly, catalyzes the two-step conversion of an N-fatty acylglycine to a primary fatty acid amide and glyoxylate. This chain is Peptidyl-glycine alpha-amidating monooxygenase, found in Homo sapiens (Human).